A 200-amino-acid chain; its full sequence is uncharacterized protein (200 aa).

Functionally, involved in osmoadaptation. This is an uncharacterized protein from Emericella nidulans (strain FGSC A4 / ATCC 38163 / CBS 112.46 / NRRL 194 / M139) (Aspergillus nidulans).